The sequence spans 201 residues: Large ribosomal subunit protein bL25 (201 aa).

This sequence belongs to the bacterial ribosomal protein bL25 family. CTC subfamily. As to quaternary structure, part of the 50S ribosomal subunit; part of the 5S rRNA/L5/L18/L25 subcomplex. Contacts the 5S rRNA. Binds to the 5S rRNA independently of L5 and L18.

Functionally, this is one of the proteins that binds to the 5S RNA in the ribosome where it forms part of the central protuberance. This chain is Large ribosomal subunit protein bL25, found in Ectopseudomonas mendocina (strain ymp) (Pseudomonas mendocina).